The following is a 635-amino-acid chain: MMVPLLLSTYFITAVYGATHTFHWTTGWGNRNVDGIKERPVITCNGEYPWPDVRVAKGDRIEVYLTNGFNNTNTSLHFHGMFQRGTNQMDGVPYLTQCPIGPGDTMLYNFTVDENVGTYWYHSHTDGQYEDGMRGLFVIEDGENNKNFPYEYDEDVMLSIGEWYDTTVDVLTRKFLNLNNPTGAEPIPQNLILNNTMNLTWEVQPDTTYLLRIVNVGGFVSQYFWIEDHEMEVVEVDGVYVEKNTTNMLYITVAQRYAVLVHTKNDTSKNFAIMQKFDDTMLDVIPKDLQLNATSYLVYDKSKPMPEQNYVDSIDDYLDDFYLVPMDKEELYPEADHVITIDVIMDNLINGVNYAFFNNITYTTPKVPTLLTVLSAGQDALNPFIYGTNTNTFVLKKGEVVDLIVNNQDTGKHPFHLHGHVFQTILRDREFDDAKGEKPHSFNDSDHAAYPSIPMKRDTVYLNPQSNMVLRFKADNPGVWFFHCHIEWHLLQGLAVVMVEDPISIQNTASQHLTANGLQVCGNVKVPTQGNAAANDSDFFNLEGQNVQHKSIPTGFTKKGIIAMTFSCLAGVLGITMIAIYGFSEIPEPEIKVMRNLHLNPEDVLEKTSSSSVISASNSSSLEDSRNQKKKFIFF.

Residues 1–17 form the signal peptide; the sequence is MMVPLLLSTYFITAVYG. Residues 18 to 559 are Extracellular-facing; the sequence is ATHTFHWTTG…KSIPTGFTKK (542 aa). Plastocyanin-like domains are found at residues 42–140 and 190–292; these read ITCN…FVIE and NLIL…LQLN. N-linked (GlcNAc...) asparagine glycans are attached at residues Asn70 and Asn73. Positions 77 and 79 each coordinate Cu cation. Asn109 carries an N-linked (GlcNAc...) asparagine glycan. Residues His122 and His124 each coordinate Cu cation. Residues Asn194, Asn198, Asn244, Asn265, Asn292, and Asn359 are each glycosylated (N-linked (GlcNAc...) asparagine). Residues 382 to 501 form the Plastocyanin-like 3 domain; it reads NPFIYGTNTN…QGLAVVMVED (120 aa). Cu cation-binding residues include His413, His416, and His418. N-linked (GlcNAc...) asparagine glycosylation is present at Asn443. Positions 483, 484, 485, and 489 each coordinate Cu cation. Asn535 carries an N-linked (GlcNAc...) asparagine glycan. A helical membrane pass occupies residues 560–580; that stretch reads GIIAMTFSCLAGVLGITMIAI. Over 581–628 the chain is Cytoplasmic; that stretch reads YGFSEIPEPEIKVMRNLHLNPEDVLEKTSSSSVISASNSSSLEDSRNQ.

The protein belongs to the multicopper oxidase family. Cu cation is required as a cofactor.

It localises to the cell membrane. Its function is as follows. Iron transport multicopper ferroxidase required for Fe(2+) high affinity uptake. Required to oxidize Fe(2+) and release it from the transporter. Essential component of copper-dependent iron transport. This chain is Iron transport multicopper oxidase FET3 (FET3), found in Candida glabrata (strain ATCC 2001 / BCRC 20586 / JCM 3761 / NBRC 0622 / NRRL Y-65 / CBS 138) (Yeast).